The chain runs to 557 residues: Myo-inositol transporter 2 (557 aa).

The Cytoplasmic portion of the chain corresponds to 1 to 76 (MDFNNIPLAT…ENGEGFEAEK (76 aa)). The tract at residues 24–69 (EMTTRPSETKKKVPFSEDMREIPSLPNEEEANATDPQANEVADENG) is disordered. Basic and acidic residues predominate over residues 30–44 (SETKKKVPFSEDMRE). A helical transmembrane segment spans residues 77–97 (ISSWIWVLSAVAGISGLLFGY). At 98–99 (DT) the chain is on the extracellular side. Residues 100 to 120 (GVISGALAVLGSDLGHVLSSG) form a helical membrane-spanning segment. Topologically, residues 121-123 (QKE) are cytoplasmic. Residues 124 to 144 (LITSATSFAALISATTSGWLA) traverse the membrane as a helical segment. At 145-157 (DWVGRKRLLLCAD) the chain is on the extracellular side. A helical membrane pass occupies residues 158 to 178 (AIFVIGSVIMAASRNVAMMVV). Over 179 to 180 (GR) the chain is Cytoplasmic. A helical membrane pass occupies residues 181 to 201 (FIVGYGIGLTSLIVPMYITEL). The Extracellular portion of the chain corresponds to 202 to 209 (APARLRGR). A helical membrane pass occupies residues 210-230 (LVIIYVVFITGGQLIAYSLNA). The Cytoplasmic portion of the chain corresponds to 231–240 (AFEHVHQGWR). The chain crosses the membrane as a helical span at residues 241–261 (IMFGIGAAPALGQLISLFWTP). The Extracellular portion of the chain corresponds to 262–367 (ESPRYLLRHN…IFQSVGFKNS (106 aa)). Residues 368-388 (ISVSIVVGATNFVFTIVAFMF) traverse the membrane as a helical segment. The Cytoplasmic portion of the chain corresponds to 389 to 396 (IDRIGRRR). A helical transmembrane segment spans residues 397–417 (ILLCTSAVMIAGLALCAIAYH). The Extracellular segment spans residues 418 to 432 (FLPADTTQNTNSGWQ). The helical transmembrane segment at 433-453 (YVVLASIIIFLASYASGIGNI) threads the bilayer. The Cytoplasmic segment spans residues 454 to 468 (PWQQAELFPMEVRAL). The chain crosses the membrane as a helical span at residues 469–489 (GAGFSTAINWVGNLIISASFL). The Extracellular portion of the chain corresponds to 490-498 (TMMESITPT). The helical transmembrane segment at 499 to 519 (GTFALFAGFCFVGLVTSYFTY) threads the bilayer. Over 520–557 (PELAGMSIENIHKLLEKGFWQAVKESTKRVRKGRIDEA) the chain is Cytoplasmic.

It belongs to the major facilitator superfamily. Sugar transporter (TC 2.A.1.1) family.

The protein localises to the membrane. It carries out the reaction myo-inositol(out) + H(+)(out) = myo-inositol(in) + H(+)(in). Functionally, transporter for myo-inositol. This is Myo-inositol transporter 2 (itr2) from Schizosaccharomyces pombe (strain 972 / ATCC 24843) (Fission yeast).